The chain runs to 1342 residues: Receptor tyrosine-protein kinase erbB-3 (1342 aa).

The first 19 residues, 1 to 19, serve as a signal peptide directing secretion; sequence MRANDALQVLGLLFSLARG. At 20–643 the chain is on the extracellular side; sequence SEVGNSQAVC…LVLIGKTHLT (624 aa). A disulfide bridge connects residues Cys29 and Cys56. N-linked (GlcNAc...) asparagine glycosylation is present at Asn126. Disulfide bonds link Cys156–Cys183, Cys186–Cys194, Cys190–Cys202, Cys210–Cys218, Cys214–Cys226, Cys227–Cys235, Cys231–Cys243, Cys246–Cys255, Cys259–Cys286, Cys290–Cys301, Cys305–Cys320, and Cys323–Cys327. N-linked (GlcNAc...) asparagine glycosylation is present at Asn250. 5 N-linked (GlcNAc...) asparagine glycosylation sites follow: Asn353, Asn408, Asn414, Asn437, and Asn469. Intrachain disulfides connect Cys500–Cys509, Cys504–Cys517, Cys520–Cys529, Cys533–Cys549, Cys552–Cys565, Cys556–Cys573, Cys576–Cys585, Cys589–Cys610, Cys613–Cys621, and Cys617–Cys629. A glycan (N-linked (GlcNAc...) asparagine) is linked at Asn522. An N-linked (GlcNAc...) asparagine glycan is attached at Asn566. A glycan (N-linked (GlcNAc...) asparagine) is linked at Asn616. Residues 644 to 664 form a helical membrane-spanning segment; the sequence is MALTVIAGLVVIFMMLGGTFL. Topologically, residues 665 to 1342 are cytoplasmic; that stretch reads YWRGRRIQNK…LFPKANAQRT (678 aa). Residue Ser686 is modified to Phosphoserine. The Protein kinase domain maps to 709–966; sequence LRKLKVLGSG…TFKELANEFT (258 aa). ATP contacts are provided by residues 715–723, Lys742, 788–790, and 834–839; these read LGSGVFGTV, QYL, and NLAARN. Asn834 serves as the catalytic Proton acceptor. 2 disordered regions span residues 980 to 999 and 1033 to 1152; these read RESG…TNKK and LPVG…PGLE. Ser982 bears the Phosphoserine mark. The segment covering 1042–1075 has biased composition (polar residues); it reads RGSQSLLSPSSGYMPMNQGNLGESCQESAVSGSS.

This sequence belongs to the protein kinase superfamily. Tyr protein kinase family. EGF receptor subfamily. In terms of assembly, monomer and homodimer. Heterodimer with each of the other ERBB receptors (Potential). Interacts with CSPG5. Interacts with GRB7. Interacts with MUC1. Interacts with MYOC. Interacts with isoform 2 of PA2G4. Found in a ternary complex with NRG1 and ITGAV:ITGB3 or ITGA6:ITGB4. In terms of processing, autophosphorylated. Ligand-binding increases phosphorylation on tyrosine residues and promotes its association with the p85 subunit of phosphatidylinositol 3-kinase. In terms of tissue distribution, epithelial tissues and brain.

Its subcellular location is the cell membrane. The protein resides in the secreted. It carries out the reaction L-tyrosyl-[protein] + ATP = O-phospho-L-tyrosyl-[protein] + ADP + H(+). Tyrosine-protein kinase that plays an essential role as cell surface receptor for neuregulins. Binds to neuregulin-1 (NRG1) and is activated by it; ligand-binding increases phosphorylation on tyrosine residues and promotes its association with the p85 subunit of phosphatidylinositol 3-kinase. May also be activated by CSPG5. Involved in the regulation of myeloid cell differentiation. The protein is Receptor tyrosine-protein kinase erbB-3 (ERBB3) of Homo sapiens (Human).